We begin with the raw amino-acid sequence, 212 residues long: Uridine kinase (212 aa).

13 to 20 (GGSGSGKT) serves as a coordination point for ATP.

It belongs to the uridine kinase family.

The protein resides in the cytoplasm. The enzyme catalyses uridine + ATP = UMP + ADP + H(+). It catalyses the reaction cytidine + ATP = CMP + ADP + H(+). It participates in pyrimidine metabolism; CTP biosynthesis via salvage pathway; CTP from cytidine: step 1/3. The protein operates within pyrimidine metabolism; UMP biosynthesis via salvage pathway; UMP from uridine: step 1/1. The chain is Uridine kinase from Bacillus cereus (strain G9842).